A 122-amino-acid chain; its full sequence is Large ribosomal subunit protein uL14 (122 aa).

Belongs to the universal ribosomal protein uL14 family. In terms of assembly, part of the 50S ribosomal subunit. Forms a cluster with proteins L3 and L19. In the 70S ribosome, L14 and L19 interact and together make contacts with the 16S rRNA in bridges B5 and B8.

Its function is as follows. Binds to 23S rRNA. Forms part of two intersubunit bridges in the 70S ribosome. The polypeptide is Large ribosomal subunit protein uL14 (Lawsonia intracellularis (strain PHE/MN1-00)).